The sequence spans 562 residues: Dihydroxy-acid dehydratase (562 aa).

Asp-78 serves as a coordination point for Mg(2+). Residue Cys-119 participates in [2Fe-2S] cluster binding. Asp-120 and Lys-121 together coordinate Mg(2+). Lys-121 bears the N6-carboxylysine mark. Cys-192 serves as a coordination point for [2Fe-2S] cluster. Glu-450 is a binding site for Mg(2+). Ser-476 serves as the catalytic Proton acceptor.

It belongs to the IlvD/Edd family. Homodimer. [2Fe-2S] cluster is required as a cofactor. The cofactor is Mg(2+).

It catalyses the reaction (2R)-2,3-dihydroxy-3-methylbutanoate = 3-methyl-2-oxobutanoate + H2O. The catalysed reaction is (2R,3R)-2,3-dihydroxy-3-methylpentanoate = (S)-3-methyl-2-oxopentanoate + H2O. It participates in amino-acid biosynthesis; L-isoleucine biosynthesis; L-isoleucine from 2-oxobutanoate: step 3/4. Its pathway is amino-acid biosynthesis; L-valine biosynthesis; L-valine from pyruvate: step 3/4. Functionally, functions in the biosynthesis of branched-chain amino acids. Catalyzes the dehydration of (2R,3R)-2,3-dihydroxy-3-methylpentanoate (2,3-dihydroxy-3-methylvalerate) into 2-oxo-3-methylpentanoate (2-oxo-3-methylvalerate) and of (2R)-2,3-dihydroxy-3-methylbutanoate (2,3-dihydroxyisovalerate) into 2-oxo-3-methylbutanoate (2-oxoisovalerate), the penultimate precursor to L-isoleucine and L-valine, respectively. This is Dihydroxy-acid dehydratase from Nautilia profundicola (strain ATCC BAA-1463 / DSM 18972 / AmH).